The sequence spans 300 residues: Fructose-bisphosphate aldolase class 1 (300 aa).

E181 acts as the Proton acceptor in catalysis. The active-site Schiff-base intermediate with dihydroxyacetone-P is the K218.

It belongs to the class I fructose-bisphosphate aldolase family.

The catalysed reaction is beta-D-fructose 1,6-bisphosphate = D-glyceraldehyde 3-phosphate + dihydroxyacetone phosphate. It participates in carbohydrate degradation; glycolysis; D-glyceraldehyde 3-phosphate and glycerone phosphate from D-glucose: step 4/4. The chain is Fructose-bisphosphate aldolase class 1 (fda) from Synechocystis sp. (strain ATCC 27184 / PCC 6803 / Kazusa).